A 732-amino-acid polypeptide reads, in one-letter code: Acylamino-acid-releasing enzyme (732 aa).

Residue Met-1 is modified to N-acetylmethionine. The residue at position 187 (Ser-187) is a Phosphoserine. Residues Ser-587, Asp-675, and His-707 each act as charge relay system in the active site.

It belongs to the peptidase S9C family. In terms of assembly, homotetramer. Expressed in the liver (at protein level).

It localises to the cytoplasm. The catalysed reaction is Cleavage of an N-acetyl or N-formyl amino acid from the N-terminus of a polypeptide.. Homotetramerization is required for activity. Tetramerization results in the formation of a gated channel which is involved in substrate selection and substrate access to the catalytic sites. In terms of biological role, this enzyme catalyzes the hydrolysis of the N-terminal peptide bond of an N-acetylated peptide to generate an N-acetylated amino acid and a peptide with a free N-terminus. It preferentially cleaves off Ac-Ala, Ac-Met and Ac-Ser. Also, involved in the degradation of oxidized and glycated proteins. The chain is Acylamino-acid-releasing enzyme (APEH) from Sus scrofa (Pig).